The sequence spans 270 residues: Hemin import ATP-binding protein HmuV (270 aa).

Residues 2-238 (LTVENIEVTL…VTLSQAYGCT (237 aa)) enclose the ABC transporter domain. 34 to 41 (GHNGSGKT) is a binding site for ATP.

Belongs to the ABC transporter superfamily. Heme (hemin) importer (TC 3.A.1.14.5) family. The complex is composed of two ATP-binding proteins (HmuV), two transmembrane proteins (HmuU) and a solute-binding protein (HmuT).

It localises to the cell inner membrane. Its function is as follows. Part of the ABC transporter complex HmuTUV involved in hemin import. Responsible for energy coupling to the transport system. In Jannaschia sp. (strain CCS1), this protein is Hemin import ATP-binding protein HmuV.